The chain runs to 145 residues: 3-hydroxyacyl-[acyl-carrier-protein] dehydratase FabZ (145 aa).

Residue His49 is part of the active site.

It belongs to the thioester dehydratase family. FabZ subfamily.

Its subcellular location is the cytoplasm. It carries out the reaction a (3R)-hydroxyacyl-[ACP] = a (2E)-enoyl-[ACP] + H2O. Its function is as follows. Involved in unsaturated fatty acids biosynthesis. Catalyzes the dehydration of short chain beta-hydroxyacyl-ACPs and long chain saturated and unsaturated beta-hydroxyacyl-ACPs. The polypeptide is 3-hydroxyacyl-[acyl-carrier-protein] dehydratase FabZ (Rickettsia felis (strain ATCC VR-1525 / URRWXCal2) (Rickettsia azadi)).